The chain runs to 1076 residues: Nucleoporin NUP1 (1076 aa).

The span at 1-11 (MSSNTSSVMSS) shows a compositional bias: low complexity. The segment at 1 to 39 (MSSNTSSVMSSPRVEKRSFSSTLKSFFTNPNKKRPSSKK) is disordered. N-acetylserine is present on S2. Residues 19-30 (FSSTLKSFFTNP) are compositionally biased toward polar residues. S54 and S161 each carry phosphoserine. Disordered stretches follow at residues 143–183 (SQSK…TNVG) and 224–260 (KKDN…ATGP). 2 stretches are compositionally biased toward polar residues: residues 154–170 (LCTS…SCTR) and 243–260 (NRNN…ATGP). The FXF 1 repeat unit spans residues 336–338 (FDF). Residue T381 is modified to Phosphothreonine. A Phosphoserine modification is found at S383. The stretch at 384–386 (FNF) is one FXF 2 repeat. The interval 403-518 (TTLFNFGGKS…SFVFGASDKQ (116 aa)) is disordered. FXFG repeat units follow at residues 406–409 (FNFG) and 422–425 (FKFG). Over residues 426-439 (KTSEKSENHTESDA) the composition is skewed to basic and acidic residues. FXFG repeat units follow at residues 448 to 451 (FSFG) and 484 to 487 (FDFG). Residues 488–505 (KTGDQKETKKGESEKDAS) are compositionally biased toward basic and acidic residues. FXFG repeat units lie at residues 510–513 (FVFG), 525–528 (FTFG), 543–546 (FTFG), and 571–574 (FTFG). A disordered region spans residues 548–743 (AATAKETHTK…SMKSTASTAA (196 aa)). FXF repeat units lie at residues 591–593 (FSF), 614–616 (FSF), 636–638 (FSF), and 657–659 (FTF). Polar residues-rich tracts occupy residues 634–649 (PTFS…SSVV) and 658–667 (TFASSKTSQP). S637 bears the Phosphoserine mark. An FXFG 9 repeat occupies 671–674 (FSFG). Residues 689 to 691 (FSF) form an FXF 7 repeat. 2 FXFG repeats span residues 708–711 (FTFG) and 727–730 (FSFG). The span at 708–723 (FTFGGSTTNNTTTTST) shows a compositional bias: low complexity. An FXF 8 repeat occupies 753–755 (FSF). An FXFG 12 repeat occupies 800 to 803 (FSFG). FXF repeat units lie at residues 819–821 (FSF) and 866–868 (FGF). Residues 885 to 888 (FNFG) form an FXFG 13 repeat. An FXF 11 repeat occupies 929–931 (FNF). The tract at residues 940-979 (GGSVFNMNGNTNANTVFAGSNNQPHQSQTPSFNTNSSFTP) is disordered. Positions 944–964 (FNMNGNTNANTVFAGSNNQPH) are enriched in polar residues. Residues 965–979 (QSQTPSFNTNSSFTP) show a composition bias toward low complexity. FG repeat units lie at residues 1008–1009 (FG), 1027–1028 (FG), and 1038–1039 (FG). A disordered region spans residues 1025–1054 (SIFGGAGGVPTTSFGQPQSAPNQMGMGTNN). The span at 1034–1045 (PTTSFGQPQSAP) shows a compositional bias: polar residues. Positions 1040–1076 (QPQSAPNQMGMGTNNGMSMGGGVMANRKIARMRHSKR) are interaction with KAP95.

In terms of assembly, component of the nuclear pore complex (NPC). NPC constitutes the exclusive means of nucleocytoplasmic transport. NPCs allow the passive diffusion of ions and small molecules and the active, nuclear transport receptor-mediated bidirectional transport of macromolecules such as proteins, RNAs, ribonucleoparticles (RNPs), and ribosomal subunits across the nuclear envelope. Due to its 8-fold rotational symmetry, all subunits are present with 8 copies or multiples thereof. Interacts through its FG repeats with nuclear transport receptors. Binds to the nuclear basket of the NPC through NUP60. Interacts with KAP122. In terms of processing, phosphorylated by CDC28.

The protein resides in the nucleus. It is found in the nuclear pore complex. Its subcellular location is the nucleus membrane. Functionally, functions as a component of the nuclear pore complex (NPC). NPC components, collectively referred to as nucleoporins (NUPs), can play the role of both NPC structural components and of docking or interaction partners for transiently associated nuclear transport factors. Active directional transport is assured by both, a Phe-Gly (FG) repeat affinity gradient for these transport factors across the NPC and a transport cofactor concentration gradient across the nuclear envelope (GSP1 and GSP2 GTPases associated predominantly with GTP in the nucleus, with GDP in the cytoplasm). As one of the FG repeat nucleoporins NUP1 is involved in interactions with and guidance of nuclear transport receptors such as SRP1-KAP95 (importin alpha and beta) through the NPC. Like the closely related NUP2 it also plays an important role in disassembling and recycling SRP1-KAP95 to the cytoplasm after nuclear import. Upon entry of the heterotrimeric SRP1-KAP95-cargo complex in the nucleus, NUP1 binds through its C-terminus to KAP95, thus accelerating the release of KAP95 and, indirectly, of the nuclear localization signal (NLS)-containing cargo from the SRP1-KAP95-cargo complex. This is Nucleoporin NUP1 (NUP1) from Saccharomyces cerevisiae (strain ATCC 204508 / S288c) (Baker's yeast).